The chain runs to 776 residues: Serine/threonine-protein kinase-like protein CCR2 (776 aa).

The N-terminal stretch at 1-22 is a signal peptide; it reads MQPNSHIFVIITISSLIITVSA. Over 23 to 432 the chain is Extracellular; sequence YGSTGTIAAA…QKEQREVRRL (410 aa). 8 N-linked (GlcNAc...) asparagine glycosylation sites follow: Asn-59, Asn-92, Asn-154, Asn-162, Asn-205, Asn-278, Asn-287, and Asn-350. Residues 341 to 396 form a TNFR-Cys repeat; it reads NCGDGWFAFNASILKESELTSLCSFHNLNICLRCGISCLEGYFPSSTCNPNADRVC. Disulfide bonds link Cys-342-Cys-371, Cys-374-Cys-388, and Cys-378-Cys-396. Residue Asn-404 is glycosylated (N-linked (GlcNAc...) asparagine). A helical transmembrane segment spans residues 433–453; that stretch reads VIIIGCSVLGFLVMLIGLSFI. Residues 454–776 lie on the Cytoplasmic side of the membrane; the sequence is PKMTKGSKRD…DLIVKSGLTF (323 aa). The region spanning 519–776 is the Protein kinase domain; sequence FKEFNELGRG…DLIVKSGLTF (258 aa). Residues 525 to 533 and Lys-547 each bind ATP; that span reads LGRGSFGFV. The Proton acceptor role is filled by Asp-644.

It belongs to the protein kinase superfamily. Ser/Thr protein kinase family. As to quaternary structure, homodimer. In terms of tissue distribution, expressed in roots, leaves, shoot apical meristems (SAM), and floral buds.

It is found in the membrane. It catalyses the reaction L-seryl-[protein] + ATP = O-phospho-L-seryl-[protein] + ADP + H(+). The enzyme catalyses L-threonyl-[protein] + ATP = O-phospho-L-threonyl-[protein] + ADP + H(+). Its function is as follows. Serine/threonine-protein kinase with low activity. The sequence is that of Serine/threonine-protein kinase-like protein CCR2 (CCR2) from Arabidopsis thaliana (Mouse-ear cress).